The primary structure comprises 165 residues: Pro-MCH (165 aa).

The first 21 residues, 1–21 (MAKMSLSSYLLILTFSLFSQG), serve as a signal peptide directing secretion. The segment at 68–88 (NDDSSFMNDEENKNSKNTGSK) is disordered. At Ile-143 the chain carries Isoleucine amide. Cys-153 and Cys-162 are joined by a disulfide.

It belongs to the melanin-concentrating hormone family. Post-translationally, pro-MCH is processed differentially in the brain and in peripheral organs producing two neuropeptides; NEI and MCH. A third peptide, NGE, may also be produced. Preferential processing in neurons by prohormone convertase 2 (PC2) generates NEI. MCH is generated in neurons of the lateral hypothalmic area by several prohormone convertases including PC1/3, PC2 and PC5/6.

It localises to the secreted. In terms of biological role, MCH may act as a neurotransmitter or neuromodulator in a broad array of neuronal functions directed toward the regulation of goal-directed behavior, such as food intake, and general arousal. This Canis lupus familiaris (Dog) protein is Pro-MCH (PMCH).